A 443-amino-acid polypeptide reads, in one-letter code: Tryptophan synthase beta chain 2, chloroplastic (443 aa).

Positions 1–32 (PGPPPPAPEGRRRRGRGRNAAGQAVAAEASPA) are disordered. Residues 1-45 (PGPPPPAPEGRRRRGRGRNAAGQAVAAEASPAAVEMGNGAAAPGL) constitute a chloroplast transit peptide. Low complexity predominate over residues 18–32 (RNAAGQAVAAEASPA). Lysine 138 bears the N6-(pyridoxal phosphate)lysine mark.

Belongs to the TrpB family. As to quaternary structure, tetramer of two alpha and two beta chains. Pyridoxal 5'-phosphate is required as a cofactor.

The protein localises to the plastid. It is found in the chloroplast. It carries out the reaction (1S,2R)-1-C-(indol-3-yl)glycerol 3-phosphate + L-serine = D-glyceraldehyde 3-phosphate + L-tryptophan + H2O. It functions in the pathway amino-acid biosynthesis; L-tryptophan biosynthesis; L-tryptophan from chorismate: step 5/5. Its function is as follows. The beta subunit is responsible for the synthesis of L-tryptophan from indole and L-serine. The chain is Tryptophan synthase beta chain 2, chloroplastic (TSB2) from Zea mays (Maize).